The chain runs to 422 residues: Probable FBD-associated F-box protein At1g32375 (422 aa).

The F-box domain occupies 1–53 (MDKLSQLPEALLVRILSLLSAKDVVSTMVLSKRWQFLWMLVPKLIYDDSYQAI). An FBD domain is found at 342 to 392 (CWNEPSAVPECLLTSLETLEWVKYEGTEEEKEVAAFILRSGSCLKKVTISS).

This is Probable FBD-associated F-box protein At1g32375 from Arabidopsis thaliana (Mouse-ear cress).